Here is a 492-residue protein sequence, read N- to C-terminus: MTTTENSLMPDVRNGIDFKVADLSLANFGRKELDLAEYEMPGLMSLRHEYAEVQPLKGARISGSLHMTVQTAVLIETLTALGAEVRWASCNIFSTQDHAAAAVVVGPYGTPEEPKGVPVFAWKGETLEEYWWAAEQMLTWPDPDKPVNMILDDGGDATMLVLRGVQYEKAGVVPPAEVDDSAEWKVFLNLLRKRFETDKGKWTKIAKSVKGVTEETTTGVLRLYQFAAAGDLAFPAINVNDSVTKSKFDNKYGTRHSLIDGINRGTDSLIGGKNVLICGYGDVGKGCAEAAKGQGARVTITEIDPINALQALMEGFDVKRVEDVIADSDIVVTATGNKDIILLEHMKAMKDHAILGNIGHFDNEIDMAALERSGATRLNIKPQVDLWTFGDSGKSIIVLSEGRLLNLGNATGHPSFVMSNSFANQTIAQIELWTKNDDYDNEVYRLPKHLDEKVARVHVEALGGQLTKLTKDQAEYLGVDVDGPFKPDHYRY.

Substrate is bound by residues Thr-68, Asp-153, and Glu-215. 216–218 lines the NAD(+) pocket; sequence TTT. Residues Lys-245 and Asp-249 each coordinate substrate. Residues Asn-250, 279-284, Glu-302, Asn-337, 358-360, and Asn-406 contribute to the NAD(+) site; these read GYGDVG and IGH.

This sequence belongs to the adenosylhomocysteinase family. NAD(+) serves as cofactor.

It localises to the cytoplasm. It catalyses the reaction S-adenosyl-L-homocysteine + H2O = L-homocysteine + adenosine. The protein operates within amino-acid biosynthesis; L-homocysteine biosynthesis; L-homocysteine from S-adenosyl-L-homocysteine: step 1/1. In terms of biological role, may play a key role in the regulation of the intracellular concentration of adenosylhomocysteine. The sequence is that of Adenosylhomocysteinase from Mycobacterium leprae (strain Br4923).